Consider the following 328-residue polypeptide: Cysteine proteinase COT44 (328 aa).

Residues 1-99 constitute a propeptide, activation peptide; it reads MSIYLRWSLE…KYSAAVNVDE (99 aa). 2 N-linked (GlcNAc...) asparagine glycosylation sites follow: Asn-48 and Asn-60. 3 disulfides stabilise this stretch: Cys-121/Cys-163, Cys-155/Cys-196, and Cys-254/Cys-305. Cys-124 is a catalytic residue. Residues His-260 and Asn-280 contribute to the active site.

It belongs to the peptidase C1 family. As to expression, present in both cotyledons and axes.

Functionally, may function in an early event in cortical cell differentiation. In Brassica napus (Rape), this protein is Cysteine proteinase COT44.